Consider the following 113-residue polypeptide: uncharacterized protein (113 aa).

A helical transmembrane segment spans residues phenylalanine 7–cysteine 29.

The protein resides in the membrane. This is an uncharacterized protein from Aquifex aeolicus (strain VF5).